The sequence spans 185 residues: Ribosome-recycling factor (185 aa).

The disordered stretch occupies residues 137 to 166 (DGLKKAEKDGDIGQDESRGQSEKVQKMTDD).

It belongs to the RRF family.

It is found in the cytoplasm. Functionally, responsible for the release of ribosomes from messenger RNA at the termination of protein biosynthesis. May increase the efficiency of translation by recycling ribosomes from one round of translation to another. The chain is Ribosome-recycling factor from Agrobacterium fabrum (strain C58 / ATCC 33970) (Agrobacterium tumefaciens (strain C58)).